The following is a 132-amino-acid chain: Large ribosomal subunit protein uL14 (132 aa).

The protein belongs to the universal ribosomal protein uL14 family. As to quaternary structure, part of the 50S ribosomal subunit. Forms a cluster with proteins L3 and L24e, part of which may contact the 16S rRNA in 2 intersubunit bridges.

Its function is as follows. Binds to 23S rRNA. Forms part of two intersubunit bridges in the 70S ribosome. The protein is Large ribosomal subunit protein uL14 of Thermoplasma acidophilum (strain ATCC 25905 / DSM 1728 / JCM 9062 / NBRC 15155 / AMRC-C165).